An 858-amino-acid chain; its full sequence is Volume-regulated anion channel subunit LRRC8D (858 aa).

At 1-22 (MFTLAEVASLNDIQPTYRILKP) the chain is on the cytoplasmic side. Residues 23 to 48 (WWDVFMDYLAVVMLMVAIFAGTMQLT) traverse the membrane as a helical segment. At 49-163 (KDQVVCLPVL…YHLALPWYSK (115 aa)) the chain is on the extracellular side. Cys54 and Cys354 are joined by a disulfide. Residues 118 to 137 (AESTFPSQETKKEKRDPTGR) are disordered. Residues 126–137 (ETKKEKRDPTGR) show a composition bias toward basic and acidic residues. Residues 164 to 182 (YFPYLALIHTIILMVSSNF) form a helical membrane-spanning segment. Residues 183 to 308 (WFKYPKTCSK…EDSDLIYKLY (126 aa)) lie on the Cytoplasmic side of the membrane. Residues 221–251 (SEENKQRITGAQTLPKHVSTSSDEGSPSAST) form a disordered region. The segment covering 227–251 (RITGAQTLPKHVSTSSDEGSPSAST) has biased composition (polar residues). A phosphoserine mark is found at Ser241, Ser242, and Ser246. A helical membrane pass occupies residues 309–330 (VVQTLIKTAKFIFILCYTANFV). The Extracellular portion of the chain corresponds to 331–360 (NAISFEHVCKPKVEHLTGYEVFECTHNMAY). A helical transmembrane segment spans residues 361 to 386 (MLKKLLISYISIICVYGFICLYTLFW). At 387–858 (LFRIPLKEYS…DVNVPFANGI (472 aa)) the chain is on the cytoplasmic side. LRR repeat units lie at residues 514–534 (NLQE…AFSF), 538–559 (HLRC…VYLL), 561–582 (NLRE…IGLE), 589–609 (HLKI…ITDV), 612–632 (HLTK…NSLK), 636–657 (NVAE…IFSL), 659–680 (NLQE…ISFQ), 684–705 (RLTC…ITHV), 707–728 (NLES…VFSL), 730–751 (KLRC…IGLL), 753–774 (NLQH…LFKC), 776–797 (KLRT…ISQL), and 799–820 (QLTQ…LGQC).

This sequence belongs to the LRRC8 family. In terms of assembly, heterohexamer; oligomerizes with other LRRC8 proteins (LRRC8A, LRRC8B, LRRC8C and/or LRRC8E) to form a heterohexamer. In vivo, the subunit composition may depend primarily on expression levels, and heterooligomeric channels containing various proportions of the different LRRC8 proteins may coexist.

It localises to the cell membrane. The protein localises to the endoplasmic reticulum membrane. It catalyses the reaction chloride(in) = chloride(out). The catalysed reaction is iodide(out) = iodide(in). It carries out the reaction taurine(out) = taurine(in). Functionally, non-essential component of the volume-regulated anion channel (VRAC, also named VSOAC channel), an anion channel required to maintain a constant cell volume in response to extracellular or intracellular osmotic changes. The VRAC channel conducts iodide better than chloride and can also conduct organic osmolytes like taurine. Plays a redundant role in the efflux of amino acids, such as aspartate, in response to osmotic stress. Channel activity requires LRRC8A plus at least one other family member (LRRC8B, LRRC8C, LRRC8D or LRRC8E); channel characteristics depend on the precise subunit composition. Also acts as a regulator of glucose-sensing in pancreatic beta cells: VRAC currents, generated in response to hypotonicity- or glucose-induced beta cell swelling, depolarize cells, thereby causing electrical excitation, leading to increase glucose sensitivity and insulin secretion. VRAC channels containing LRRC8D inhibit transport of immunoreactive cyclic dinucleotide GMP-AMP (2'-3'-cGAMP), an immune messenger produced in response to DNA virus in the cytosol. The chain is Volume-regulated anion channel subunit LRRC8D from Rattus norvegicus (Rat).